The following is a 239-amino-acid chain: Aspartate/glutamate leucyltransferase (239 aa).

This sequence belongs to the R-transferase family. Bpt subfamily.

Its subcellular location is the cytoplasm. The catalysed reaction is N-terminal L-glutamyl-[protein] + L-leucyl-tRNA(Leu) = N-terminal L-leucyl-L-glutamyl-[protein] + tRNA(Leu) + H(+). It carries out the reaction N-terminal L-aspartyl-[protein] + L-leucyl-tRNA(Leu) = N-terminal L-leucyl-L-aspartyl-[protein] + tRNA(Leu) + H(+). In terms of biological role, functions in the N-end rule pathway of protein degradation where it conjugates Leu from its aminoacyl-tRNA to the N-termini of proteins containing an N-terminal aspartate or glutamate. The chain is Aspartate/glutamate leucyltransferase from Campylobacter jejuni subsp. jejuni serotype O:6 (strain 81116 / NCTC 11828).